The chain runs to 284 residues: Phosphoenolpyruvate guanylyltransferase (284 aa).

The tract at residues 94–123 (ADLSADEPAGTDAERRADPSAENRASTSAQ) is disordered. The segment covering 105-114 (DAERRADPSA) has biased composition (basic and acidic residues). Positions 203, 219, and 222 each coordinate phosphoenolpyruvate.

It belongs to the CofC family.

It carries out the reaction phosphoenolpyruvate + GTP + H(+) = enolpyruvoyl-2-diphospho-5'-guanosine + diphosphate. It participates in cofactor biosynthesis; coenzyme F420 biosynthesis. Functionally, guanylyltransferase that catalyzes the activation of phosphoenolpyruvate (PEP) as enolpyruvoyl-2-diphospho-5'-guanosine, via the condensation of PEP with GTP. It is involved in the biosynthesis of coenzyme F420, a hydride carrier cofactor. This Sanguibacter keddieii (strain ATCC 51767 / DSM 10542 / NCFB 3025 / ST-74) protein is Phosphoenolpyruvate guanylyltransferase.